The chain runs to 1034 residues: Isoleucine--tRNA ligase (1034 aa).

The 'HIGH' region motif lies at 48–58 (PTANGKPHIGH). Positions 588 to 592 (KMSKH) match the 'KMSKS' region motif. Lys591 contacts ATP.

The protein belongs to the class-I aminoacyl-tRNA synthetase family. IleS type 2 subfamily. Monomer. It depends on Zn(2+) as a cofactor.

The protein localises to the cytoplasm. The catalysed reaction is tRNA(Ile) + L-isoleucine + ATP = L-isoleucyl-tRNA(Ile) + AMP + diphosphate. Its function is as follows. Catalyzes the attachment of isoleucine to tRNA(Ile). As IleRS can inadvertently accommodate and process structurally similar amino acids such as valine, to avoid such errors it has two additional distinct tRNA(Ile)-dependent editing activities. One activity is designated as 'pretransfer' editing and involves the hydrolysis of activated Val-AMP. The other activity is designated 'posttransfer' editing and involves deacylation of mischarged Val-tRNA(Ile). The protein is Isoleucine--tRNA ligase of Clostridium kluyveri (strain ATCC 8527 / DSM 555 / NBRC 12016 / NCIMB 10680 / K1).